The chain runs to 200 residues: Dephospho-CoA kinase (200 aa).

One can recognise a DPCK domain in the interval 3 to 200 (RIGLTGGIGS…LIAEILSRVN (198 aa)). 11–16 (GSGKST) provides a ligand contact to ATP.

It belongs to the CoaE family.

The protein localises to the cytoplasm. The catalysed reaction is 3'-dephospho-CoA + ATP = ADP + CoA + H(+). The protein operates within cofactor biosynthesis; coenzyme A biosynthesis; CoA from (R)-pantothenate: step 5/5. Catalyzes the phosphorylation of the 3'-hydroxyl group of dephosphocoenzyme A to form coenzyme A. This Corynebacterium glutamicum (strain ATCC 13032 / DSM 20300 / JCM 1318 / BCRC 11384 / CCUG 27702 / LMG 3730 / NBRC 12168 / NCIMB 10025 / NRRL B-2784 / 534) protein is Dephospho-CoA kinase.